A 196-amino-acid polypeptide reads, in one-letter code: Recombination protein RecR (196 aa).

The C4-type zinc finger occupies 56 to 71 (CPVCGGLDSQQPCMIC). Positions 78–172 (PLICVVETVA…SVTRLAQGVP (95 aa)) constitute a Toprim domain.

The protein belongs to the RecR family.

Its function is as follows. May play a role in DNA repair. It seems to be involved in an RecBC-independent recombinational process of DNA repair. It may act with RecF and RecO. This is Recombination protein RecR from Acidiphilium cryptum (strain JF-5).